A 246-amino-acid polypeptide reads, in one-letter code: Biosynthetic peptidoglycan transglycosylase (246 aa).

A helical membrane pass occupies residues 20–42 (WLRWLMAAPLLFAAASVLQVLIL).

Belongs to the glycosyltransferase 51 family.

The protein localises to the cell inner membrane. The enzyme catalyses [GlcNAc-(1-&gt;4)-Mur2Ac(oyl-L-Ala-gamma-D-Glu-L-Lys-D-Ala-D-Ala)](n)-di-trans,octa-cis-undecaprenyl diphosphate + beta-D-GlcNAc-(1-&gt;4)-Mur2Ac(oyl-L-Ala-gamma-D-Glu-L-Lys-D-Ala-D-Ala)-di-trans,octa-cis-undecaprenyl diphosphate = [GlcNAc-(1-&gt;4)-Mur2Ac(oyl-L-Ala-gamma-D-Glu-L-Lys-D-Ala-D-Ala)](n+1)-di-trans,octa-cis-undecaprenyl diphosphate + di-trans,octa-cis-undecaprenyl diphosphate + H(+). It participates in cell wall biogenesis; peptidoglycan biosynthesis. Its function is as follows. Peptidoglycan polymerase that catalyzes glycan chain elongation from lipid-linked precursors. The protein is Biosynthetic peptidoglycan transglycosylase of Xanthomonas axonopodis pv. citri (strain 306).